Here is a 159-residue protein sequence, read N- to C-terminus: uncharacterized protein (159 aa).

Belongs to the SufE family.

This is an uncharacterized protein from Synechocystis sp. (strain ATCC 27184 / PCC 6803 / Kazusa).